The sequence spans 301 residues: Ornithine carbamoyltransferase (301 aa).

Carbamoyl phosphate contacts are provided by residues arginine 100 and 127 to 130; that span reads HPCQ. L-ornithine contacts are provided by residues asparagine 158, aspartate 221, and 225–226; that span reads SM. Carbamoyl phosphate is bound by residues cysteine 260 and arginine 288.

It belongs to the aspartate/ornithine carbamoyltransferase superfamily. OTCase family. In terms of assembly, homododecamer.

It localises to the cytoplasm. It carries out the reaction carbamoyl phosphate + L-ornithine = L-citrulline + phosphate + H(+). The protein operates within amino-acid biosynthesis; L-arginine biosynthesis; L-arginine from L-ornithine and carbamoyl phosphate: step 1/3. Functionally, reversibly catalyzes the transfer of the carbamoyl group from carbamoyl phosphate (CP) to the N(epsilon) atom of ornithine (ORN) to produce L-citrulline. In Moritella profunda, this protein is Ornithine carbamoyltransferase (argF).